We begin with the raw amino-acid sequence, 204 residues long: Ribosomal RNA large subunit methyltransferase E (204 aa).

S-adenosyl-L-methionine-binding residues include glycine 49, tryptophan 51, aspartate 69, asparagine 87, and aspartate 111. Lysine 151 functions as the Proton acceptor in the catalytic mechanism.

This sequence belongs to the class I-like SAM-binding methyltransferase superfamily. RNA methyltransferase RlmE family.

The protein resides in the cytoplasm. It catalyses the reaction uridine(2552) in 23S rRNA + S-adenosyl-L-methionine = 2'-O-methyluridine(2552) in 23S rRNA + S-adenosyl-L-homocysteine + H(+). In terms of biological role, specifically methylates the uridine in position 2552 of 23S rRNA at the 2'-O position of the ribose in the fully assembled 50S ribosomal subunit. This Nitratidesulfovibrio vulgaris (strain ATCC 29579 / DSM 644 / CCUG 34227 / NCIMB 8303 / VKM B-1760 / Hildenborough) (Desulfovibrio vulgaris) protein is Ribosomal RNA large subunit methyltransferase E.